Consider the following 1040-residue polypeptide: Myoblast growth factor receptor egl-15 (1040 aa).

The signal sequence occupies residues 1-19 (MSYFLASCLGVGLLSTVSC). Over 20-525 (SLQGLTSHYR…PKIDRWTTSD (506 aa)) the chain is Extracellular. Residues 33–125 (PRFKHVANER…GQISRNFTVE (93 aa)) enclose the Ig-like C2-type 1 domain. A disulfide bridge links Cys55 with Cys109. A glycan (N-linked (GlcNAc...) asparagine) is linked at Asn121. Residues 234 to 257 (VHDSEESPSESRTEFINADEKENK) show a composition bias toward basic and acidic residues. The tract at residues 234–267 (VHDSEESPSESRTEFINADEKENKEDEEEDYSVS) is disordered. Residues Asn280 and Asn299 are each glycosylated (N-linked (GlcNAc...) asparagine). Ig-like C2-type domains are found at residues 287–383 (PYFK…FHVI) and 391–501 (PPII…ATLT). A disulfide bridge links Cys314 with Cys367. N-linked (GlcNAc...) asparagine glycosylation is found at Asn401, Asn407, Asn433, Asn440, Asn449, Asn474, and Asn497. Cysteines 414 and 485 form a disulfide. The chain crosses the membrane as a helical span at residues 526-549 (YIFTTILLFLLLAATLFGILFMVC). At 550–1040 (KQTLHKKGFM…NNNSMSKPEF (491 aa)) the chain is on the cytoplasmic side. The Protein kinase domain maps to 640-931 (LSLVHMLGEG…KTIVDYLDWM (292 aa)). ATP is bound by residues 646–654 (LGEGAFGEV) and Lys672. Catalysis depends on Asp797, which acts as the Proton acceptor. Tyr828 carries the post-translational modification Phosphotyrosine; by autocatalysis. 2 disordered regions span residues 952 to 984 (ERST…LPSE) and 1021 to 1040 (TPET…KPEF). Residues 1022 to 1040 (PETSQRIPSNNNSMSKPEF) show a composition bias toward polar residues.

The protein belongs to the protein kinase superfamily. Tyr protein kinase family. Fibroblast growth factor receptor subfamily. Mg(2+) is required as a cofactor. Activity is regulated by the phosphatase clr-1, however it is not known whether clr-1 acts directly on egl-15.

The protein localises to the membrane. It catalyses the reaction L-tyrosyl-[protein] + ATP = O-phospho-L-tyrosyl-[protein] + ADP + H(+). Functionally, receptor tyrosine kinase required for larval development. May phosphorylate adapter protein soc-1 which in turn may result in the recruitment and/or activation of phosphatase ptp-2. May activate the Ras/MAPK kinase signaling pathway which includes sem-5, sos-1, let-60/Ras, lin-45/Raf, mek-2 and mpk-1. Acts in the hypodermis to regulate axon growth and fluid homeostasis. Activates protein degradation in muscles. Probably following interaction with ligand let-756, negatively regulates membrane protrusion from body wall muscles during larval development. Plays a role in nicotinic acetylcholine receptor (nAChR)-mediated sensitivity to nicotine. Regulates synaptic levels of nAChR subunit lev-1 in the nerve cord. Affects the maintenance of axon position without affecting axon growth. Interaction with egl-17 is required for the guidance of sex myoblast migration during gonad development. In terms of biological role, interaction with let-756 appears to play a role in maintaining body morphology at higher temperatures. In Caenorhabditis elegans, this protein is Myoblast growth factor receptor egl-15 (egl-15).